Reading from the N-terminus, the 56-residue chain is Repressor-like protein SSo7c4 (56 aa).

The region spanning 4 to 51 (EEIVKVSRNYQVTIPAKVRQKFQIKEGDLVKVTFDESGGVVKIQLLDS) is the SpoVT-AbrB domain.

This is Repressor-like protein SSo7c4 from Saccharolobus solfataricus (strain ATCC 35092 / DSM 1617 / JCM 11322 / P2) (Sulfolobus solfataricus).